We begin with the raw amino-acid sequence, 183 residues long: ATP synthase subunit delta (183 aa).

It belongs to the ATPase delta chain family. F-type ATPases have 2 components, F(1) - the catalytic core - and F(0) - the membrane proton channel. F(1) has five subunits: alpha(3), beta(3), gamma(1), delta(1), epsilon(1). F(0) has three main subunits: a(1), b(2) and c(10-14). The alpha and beta chains form an alternating ring which encloses part of the gamma chain. F(1) is attached to F(0) by a central stalk formed by the gamma and epsilon chains, while a peripheral stalk is formed by the delta and b chains.

The protein resides in the cell inner membrane. Its function is as follows. F(1)F(0) ATP synthase produces ATP from ADP in the presence of a proton or sodium gradient. F-type ATPases consist of two structural domains, F(1) containing the extramembraneous catalytic core and F(0) containing the membrane proton channel, linked together by a central stalk and a peripheral stalk. During catalysis, ATP synthesis in the catalytic domain of F(1) is coupled via a rotary mechanism of the central stalk subunits to proton translocation. This protein is part of the stalk that links CF(0) to CF(1). It either transmits conformational changes from CF(0) to CF(1) or is implicated in proton conduction. The polypeptide is ATP synthase subunit delta (Desulforapulum autotrophicum (strain ATCC 43914 / DSM 3382 / VKM B-1955 / HRM2) (Desulfobacterium autotrophicum)).